The following is an 825-amino-acid chain: Penicillin-binding protein 1A (825 aa).

Over 1 to 6 the chain is Cytoplasmic; it reads MKFIKR. A helical; Signal-anchor for type II membrane protein transmembrane segment spans residues 7–27; that stretch reads LLVFSLICIILGVTTIFGFYF. The Periplasmic portion of the chain corresponds to 28 to 825; it reads YVKSDLPDVA…YSTSSGEELF (798 aa). The tract at residues 48–216 is transglycosylase; that stretch reads MQVFSQDGKL…STMNPIYSVE (169 aa). Catalysis depends on glutamate 86, which acts as the Proton donor; for transglycosylase activity. The interval 413 to 752 is transpeptidase; that stretch reads PRTQDGAITA…GKTALPAWVE (340 aa). Residue serine 471 is the Acyl-ester intermediate; for transpeptidase activity of the active site.

It in the N-terminal section; belongs to the glycosyltransferase 51 family. In the C-terminal section; belongs to the transpeptidase family.

It localises to the cell inner membrane. The enzyme catalyses [GlcNAc-(1-&gt;4)-Mur2Ac(oyl-L-Ala-gamma-D-Glu-L-Lys-D-Ala-D-Ala)](n)-di-trans,octa-cis-undecaprenyl diphosphate + beta-D-GlcNAc-(1-&gt;4)-Mur2Ac(oyl-L-Ala-gamma-D-Glu-L-Lys-D-Ala-D-Ala)-di-trans,octa-cis-undecaprenyl diphosphate = [GlcNAc-(1-&gt;4)-Mur2Ac(oyl-L-Ala-gamma-D-Glu-L-Lys-D-Ala-D-Ala)](n+1)-di-trans,octa-cis-undecaprenyl diphosphate + di-trans,octa-cis-undecaprenyl diphosphate + H(+). It carries out the reaction Preferential cleavage: (Ac)2-L-Lys-D-Ala-|-D-Ala. Also transpeptidation of peptidyl-alanyl moieties that are N-acyl substituents of D-alanine.. Its pathway is cell wall biogenesis; peptidoglycan biosynthesis. Functionally, cell wall formation. Synthesis of cross-linked peptidoglycan from the lipid intermediates. The enzyme has a penicillin-insensitive transglycosylase N-terminal domain (formation of linear glycan strands) and a penicillin-sensitive transpeptidase C-terminal domain (cross-linking of the peptide subunits). The protein is Penicillin-binding protein 1A (mrcA) of Vibrio cholerae serotype O1 (strain ATCC 39315 / El Tor Inaba N16961).